The chain runs to 143 residues: Large ribosomal subunit protein uL16 (143 aa).

The protein belongs to the universal ribosomal protein uL16 family. In terms of assembly, part of the 50S ribosomal subunit.

Its function is as follows. Binds 23S rRNA and is also seen to make contacts with the A and possibly P site tRNAs. The chain is Large ribosomal subunit protein uL16 from Fusobacterium nucleatum subsp. nucleatum (strain ATCC 25586 / DSM 15643 / BCRC 10681 / CIP 101130 / JCM 8532 / KCTC 2640 / LMG 13131 / VPI 4355).